Here is a 229-residue protein sequence, read N- to C-terminus: General odorant-binding protein 69 (229 aa).

A signal peptide spans 1 to 20 (MDRLLLVLLSSASLLLTVYG). An intrachain disulfide couples cysteine 66 to cysteine 106.

This sequence belongs to the PBP/GOBP family.

The protein resides in the secreted. Functionally, present in the aqueous fluid surrounding olfactory sensory dendrites and are thought to aid in the capture and transport of hydrophobic odorants into and through this fluid. In Anopheles gambiae (African malaria mosquito), this protein is General odorant-binding protein 69 (Obp69).